Here is a 301-residue protein sequence, read N- to C-terminus: Oxygen-dependent coproporphyrinogen-III oxidase (301 aa).

Serine 92 is a substrate binding site. A divalent metal cation contacts are provided by histidine 96 and histidine 106. Histidine 106 (proton donor) is an active-site residue. Asparagine 108–arginine 110 contacts substrate. The a divalent metal cation site is built by histidine 145 and histidine 175. Residues tyrosine 240–glutamate 275 are important for dimerization. Substrate is bound at residue glycine 258–arginine 260.

Belongs to the aerobic coproporphyrinogen-III oxidase family. Homodimer. Requires a divalent metal cation as cofactor.

The protein resides in the cytoplasm. The enzyme catalyses coproporphyrinogen III + O2 + 2 H(+) = protoporphyrinogen IX + 2 CO2 + 2 H2O. It functions in the pathway porphyrin-containing compound metabolism; protoporphyrin-IX biosynthesis; protoporphyrinogen-IX from coproporphyrinogen-III (O2 route): step 1/1. Involved in the heme biosynthesis. Catalyzes the aerobic oxidative decarboxylation of propionate groups of rings A and B of coproporphyrinogen-III to yield the vinyl groups in protoporphyrinogen-IX. The protein is Oxygen-dependent coproporphyrinogen-III oxidase of Cronobacter sakazakii (strain ATCC BAA-894) (Enterobacter sakazakii).